The sequence spans 289 residues: MKMPASMEPDWKALLRVLRAHSATFYLGSLLFPKEARKGAWAVYAACRLGDEAVDGEGGGPEALEAWWAGVERAYRGRPLAEWEKGLAWALERWDIPFEAFLHMREGFLTDLGPVRLGTEAELLRYCYQVAGTVGRMMAPIAGGGKEAEARAVKLGQAMQLTNILRDVGEDLERDRVYLPLDLLRAHGVEVEDLRAGRVTPGYRALMAHLEGKARALYREGLAGLGHLKVGRAAIALAALQYRGILDKLRLSGYDNLGRRAHLKAWERALLLPKAFLAARFPPRPEGSP.

It belongs to the phytoene/squalene synthase family. The cofactor is ATP. It depends on Mn(2+) as a cofactor. Requires Mg(2+) as cofactor.

It functions in the pathway carotenoid biosynthesis; phytoene biosynthesis. Its function is as follows. Involved in the biosynthesis of carotenoids. Catalyzes the condensation of two molecules of geranylgeranyl diphosphate (GGPP) to give prephytoene diphosphate (PPPP) and the subsequent rearrangement of the cyclopropylcarbinyl intermediate to yield phytoene. The sequence is that of Phytoene synthase (crtB) from Thermus thermophilus (strain ATCC BAA-163 / DSM 7039 / HB27).